We begin with the raw amino-acid sequence, 596 residues long: Proton channel OTOP3 (596 aa).

Low complexity predominate over residues 1–21; that stretch reads MGRGARAAAAQSRWGRASRAS. The segment at 1–59 is disordered; sequence MGRGARAAAAQSRWGRASRASVSPGRTIRSAPAVGEAQETEAAPEKENRVDVGAEERAA. Topologically, residues 1-88 are cytoplasmic; sequence MGRGARAAAA…RDRQAQKAGQ (88 aa). 2 positions are modified to phosphoserine: serine 21 and serine 23. Positions 43–59 are enriched in basic and acidic residues; the sequence is APEKENRVDVGAEERAA. A helical membrane pass occupies residues 89–109; it reads LFSGLLALNVVFLGGAFICSM. Residues 110 to 119 are Extracellular-facing; the sequence is IFNKVAVTLG. A helical membrane pass occupies residues 120-143; the sequence is DVWILLATLKVLSLLWLLYYVAST. The Cytoplasmic segment spans residues 144–159; the sequence is TRRPHAVLYQDPHAGP. The helical transmembrane segment at 160–181 threads the bilayer; the sequence is LWVRGSLVLFGSCTFCLNIFRV. Over 182–193 the chain is Extracellular; that stretch reads GYDVSHIRCKSQ. A helical transmembrane segment spans residues 194–217; that stretch reads LDLVFSVIEMVFIGVQTWVLWKHC. Topologically, residues 218-225 are cytoplasmic; it reads KDCVRVQT. Residues 226 to 248 form a helical membrane-spanning segment; that stretch reads NFTRCGLMLTLATNLLLWVLAVT. The Extracellular portion of the chain corresponds to 249-295; the sequence is NDSMHREIEAELGILMEKSTGNETNTCLCLNATACEAFRRGFLMLYP. The helical transmembrane segment at 296–312 threads the bilayer; that stretch reads FSTEYCLICCAVLFVMW. The Cytoplasmic portion of the chain corresponds to 313-338; it reads KNVGRHVAPHMGAHPATAPFHLHGAI. A helical membrane pass occupies residues 339–358; it reads FGPLLGLLVLLAGVCVFVLF. The Extracellular portion of the chain corresponds to 359–372; that stretch reads QIEASGPAIACQYF. The chain crosses the membrane as a helical span at residues 373 to 395; the sequence is TLYYAFYVAVLPTMSLACLAGTA. Residues 396–413 lie on the Cytoplasmic side of the membrane; that stretch reads IHGLEERELDTVKNPTRS. The chain crosses the membrane as a helical span at residues 414–435; that stretch reads LDVVLLMGAALGQMGIAYFSIV. Residues 436-446 lie on the Extracellular side of the membrane; it reads AIVAKRPHELL. The helical transmembrane segment at 447–469 threads the bilayer; sequence NRLILAYSLLLILQHIAQNLFII. Topologically, residues 470–529 are cytoplasmic; it reads EGLHRRPLWETVPEGLAGKQEAEPPRRGSLLELGQGLQRASLAYIHSYSHLNWKRRALKE. The chain crosses the membrane as a helical span at residues 530 to 547; the sequence is ISLFLILCNITLWMMPAF. The Extracellular portion of the chain corresponds to 548–566; the sequence is GIHPEFENGLEKDFYGYQI. Residues 567–589 form a helical membrane-spanning segment; it reads WFAIVNFGLPLGVFYRMHSVGGL. The Cytoplasmic segment spans residues 590–596; it reads VEVYLGA.

Belongs to the otopetrin family. In terms of assembly, homodimer.

Its subcellular location is the cell membrane. The catalysed reaction is H(+)(in) = H(+)(out). With respect to regulation, activated by extracellular acidification. Activated by Zn(2+) under non-acidic conditions. Its function is as follows. Proton-selective channel gated by extracellular protons. This Homo sapiens (Human) protein is Proton channel OTOP3.